Reading from the N-terminus, the 372-residue chain is NAD(P)H-quinone oxidoreductase subunit 1 (372 aa).

The next 9 membrane-spanning stretches (helical) occupy residues 27–47 (TIWL…GVLV), 65–85 (PEYI…KLVF), 97–117 (WLFT…YLIV), 128–148 (LGIG…GLLM), 176–196 (LALA…IDIV), 204–224 (ILGW…IAAL), 249–269 (YAGM…VLSS), 308–328 (GLGL…AILL), and 351–371 (VGLV…FAFG).

The protein belongs to the complex I subunit 1 family. As to quaternary structure, NDH-1 is composed of at least 11 different subunits.

It localises to the cellular thylakoid membrane. It carries out the reaction a plastoquinone + NADH + (n+1) H(+)(in) = a plastoquinol + NAD(+) + n H(+)(out). The catalysed reaction is a plastoquinone + NADPH + (n+1) H(+)(in) = a plastoquinol + NADP(+) + n H(+)(out). NDH-1 shuttles electrons from an unknown electron donor, via FMN and iron-sulfur (Fe-S) centers, to quinones in the respiratory and/or the photosynthetic chain. The immediate electron acceptor for the enzyme in this species is believed to be plastoquinone. Couples the redox reaction to proton translocation, and thus conserves the redox energy in a proton gradient. The chain is NAD(P)H-quinone oxidoreductase subunit 1 from Acaryochloris marina (strain MBIC 11017).